A 293-amino-acid chain; its full sequence is 5'-3' exoribonuclease Rnm (293 aa).

Residues histidine 13, histidine 15, aspartate 20, histidine 45, glutamate 72, histidine 83, histidine 198, aspartate 255, and histidine 257 each contribute to the Mn(2+) site.

It belongs to the PHP family. TrpH/YciV subfamily. Requires Mn(2+) as cofactor.

It catalyses the reaction a ribonucleoside 3',5'-bisphosphate + H2O = a ribonucleoside 5'-phosphate + phosphate. Functionally, exoribonuclease that catalyzes the last steps of 5S, 16S and 23S rRNA 5'-end maturation. Removes 3 nucleotides (nt) from the 5' end of 5S, 16S and 23S rRNA precursors to generate the mature 5' ends. Precursors with longer extensions are not processed (7 nt at the 5' end of pre-23S rRNA or 66 nt at the 5'-end of 16S rRNA are not processed). 5S and 23S rRNA maturation occurs more efficiently and accurately on ribosomal particles as compared to free RNA; the enzyme overdigests free RNA but generates the correct 5'-end in ribosomes from rnm deletion strains. Efficiently catalyzes the hydrolysis of the 3'-phosphate from 3',5'-bis-phosphonucleotides as well as the successive hydrolysis of 5'-phosphomononucleotides from the 5'-end of short pieces of RNA and DNA, with no specificity toward the identity of the nucleotide base. Is more efficient at hydrolyzing RNA oligonucleotides than DNA oligonucleotides. This enzyme can also hydrolyze annealed DNA duplexes, albeit at a catalytic efficiency approximately 10-fold lower than that of the corresponding single-stranded oligonucleotides. This is 5'-3' exoribonuclease Rnm from Escherichia coli (strain K12).